The primary structure comprises 323 residues: Acetyl-coenzyme A carboxylase carboxyl transferase subunit alpha (323 aa).

The CoA carboxyltransferase C-terminal domain maps to 39–293 (RLSKKSQQLT…RRALADSLRQ (255 aa)).

This sequence belongs to the AccA family. In terms of assembly, acetyl-CoA carboxylase is a heterohexamer composed of biotin carboxyl carrier protein (AccB), biotin carboxylase (AccC) and two subunits each of ACCase subunit alpha (AccA) and ACCase subunit beta (AccD).

Its subcellular location is the cytoplasm. The enzyme catalyses N(6)-carboxybiotinyl-L-lysyl-[protein] + acetyl-CoA = N(6)-biotinyl-L-lysyl-[protein] + malonyl-CoA. The protein operates within lipid metabolism; malonyl-CoA biosynthesis; malonyl-CoA from acetyl-CoA: step 1/1. Functionally, component of the acetyl coenzyme A carboxylase (ACC) complex. First, biotin carboxylase catalyzes the carboxylation of biotin on its carrier protein (BCCP) and then the CO(2) group is transferred by the carboxyltransferase to acetyl-CoA to form malonyl-CoA. This is Acetyl-coenzyme A carboxylase carboxyl transferase subunit alpha from Burkholderia multivorans (strain ATCC 17616 / 249).